Consider the following 627-residue polypeptide: Carene synthase, chloroplastic (627 aa).

A chloroplast-targeting transit peptide spans M1–V36. The Mg(2+) site is built by D378, D382, and D530. A DDXXD motif motif is present at residues D378 to D382.

Belongs to the terpene synthase family. Tpsd subfamily. It depends on Mg(2+) as a cofactor. The cofactor is Mn(2+).

It is found in the plastid. Its subcellular location is the chloroplast. It catalyses the reaction (2E)-geranyl diphosphate = (+)-car-3-ene + diphosphate. The protein operates within terpene metabolism; oleoresin biosynthesis. Functionally, terpene synthase (TPS) involved in defensive oleoresin formation in conifers in response to insect attack or other injury. In Picea glauca (White spruce), this protein is Carene synthase, chloroplastic (3CAR).